A 311-amino-acid chain; its full sequence is Burkholderia TALE-like protein 3 (311 aa).

A Cryptic repeat -1 repeat occupies 19–50; the sequence is LSPFECLKIEKHSGGADALEFISNKYDALTQV. A Cryptic repeat 0 repeat occupies 51–83; the sequence is LSRADILKIACHDCAAHALQAVLDYEQVFRQRG. Core repeat repeat units follow at residues 84-116, 117-149, 150-182, 183-215, 216-248, and 249-281; these read FARA…NECG, FSQA…NERD, YSGA…CESG, YSGA…CERG, YCRT…CERG, and YSRT…TQAG. A Cryptic repeat +1 repeat occupies 282–311; sequence RSNEDIVNMAARTGAAGQIRKMAAQLSGRQ.

This sequence belongs to the transcription activator-like effector (TALE) family. Bat subfamily.

In terms of biological role, does not bind DNA, probably because it has too few core repeats. The polypeptide is Burkholderia TALE-like protein 3 (Mycetohabitans rhizoxinica (strain DSM 19002 / CIP 109453 / HKI 454) (Paraburkholderia rhizoxinica)).